Here is a 37-residue protein sequence, read N- to C-terminus: Large ribosomal subunit protein bL36 (37 aa).

The protein belongs to the bacterial ribosomal protein bL36 family.

This chain is Large ribosomal subunit protein bL36, found in Mycoplasma genitalium (strain ATCC 33530 / DSM 19775 / NCTC 10195 / G37) (Mycoplasmoides genitalium).